The chain runs to 327 residues: DNA repair protein XRCC4 (327 aa).

Residues 1 to 211 (MERKVSRISL…QLEKNLKPER (211 aa)) are interaction with IFFO1. Serine 53 bears the Phosphoserine mark. 2 coiled-coil regions span residues 133–153 (IAEKQAKNEHLQKENDRLLRD) and 183–213 (LNEKKTKIRSLHKLLDEIQQLEKNLKPERET). Interaction with LIG4 regions lie at residues 179-210 (FILVLNEKKTKIRSLHKLLDEIQQLEKNLKPE) and 179-211 (FILVLNEKKTKIRSLHKLLDEIQQLEKNLKPER). The residue at position 192 (serine 192) is a Phosphoserine. Lysine 208 is covalently cross-linked (Glycyl lysine isopeptide (Lys-Gly) (interchain with G-Cter in SUMO)). Position 226 is a phosphotyrosine (tyrosine 226). Phosphoserine is present on serine 229. Threonine 230 bears the Phosphothreonine mark. Residues serine 249 and serine 253 each carry the phosphoserine modification. The tract at residues 255-327 (DVTDIAPSRK…RNSSPEDIFD (73 aa)) is disordered. The Nuclear localization signal motif lies at 263–268 (RKRRHH). Lysine 289 is covalently cross-linked (Glycyl lysine isopeptide (Lys-Gly) (interchain with G-Cter in ubiquitin)). Phosphoserine occurs at positions 294, 295, 308, and 313. A compositionally biased stretch (polar residues) spans 308–327 (SAGNMSLETLRNSSPEDIFD). The residue at position 316 (threonine 316) is a Phosphothreonine. Residues serine 320 and serine 321 each carry the phosphoserine modification.

This sequence belongs to the XRCC4-XLF family. XRCC4 subfamily. Homodimer and homotetramer in solution. Interacts with NHEJ1/XLF; the interaction is direct and is mediated via a head-to-head interaction between N-terminal head regions. Interacts with LIG4; the LIG4-XRCC4 subcomplex has a 1:2 stoichiometry and XRCC4 is required for LIG4 stability. Component of the core long-range non-homologous end joining (NHEJ) complex (also named DNA-PK complex) composed of PRKDC, LIG4, XRCC4, XRCC6/Ku70, XRCC5/Ku86 and NHEJ1/XLF. Additional component of the NHEJ complex includes PAXX. Following autophosphorylation, PRKDC dissociates from DNA, leading to formation of the short-range NHEJ complex, composed of LIG4, XRCC4, XRCC6/Ku70, XRCC5/Ku86 and NHEJ1/XLF. Interacts with PRKDC; the interaction is direct. Interacts with XRCC6/Ku70; the interaction is direct. Interacts with APTX and APLF. Forms a heterotetramer with IFFO1; the interaction involves LIG4-free XRCC4 and leads to the relocalization of IFFO1 to the sites of DNA damage. Interacts with PNKP; mainly interacts with PNKP when phosphorylated at Thr-230, but is also able to interact at much lower level with PNKP when not unphosphorylated. Interacts with POLL (DNA polymerase lambda). In terms of assembly, interacts with XKR4; interacts with the processed form of XKR4, which is cleaved by caspase. Post-translationally, phosphorylated by PRKDC at the C-terminus in response to DNA damage; Ser-253 constitutes the main phosphorylation sites. Phosphorylations by PRKDC at the C-terminus of XRCC4 and NHEJ1/XLF are highly redundant and regulate ability of the XRCC4-NHEJ1/XLF subcomplex to bridge DNA. Phosphorylation by PRKDC does not prevent interaction with NHEJ1/XLF but disrupts ability to bridge DNA and promotes detachment from DNA. Phosphorylation at Ser-320 and Ser-321 by PRKDC promotes recognition by the SCF(FBXW7) complex and subsequent ubiquitination via 'Lys-63'-linked ubiquitin. Phosphorylation at Thr-230 by CK2 promotes interaction with PNKP; regulating PNKP activity and localization to DNA damage sites. Phosphorylation by CK2 promotes interaction with APTX. In terms of processing, ubiquitinated at Lys-289 by the SCF(FBXW7) complex via 'Lys-63'-linked ubiquitination, thereby promoting double-strand break repair: the SCF(FBXW7) complex specifically recognizes XRCC4 when phosphorylated at Ser-320 and Ser-321 by PRKDC, and 'Lys-63'-linked ubiquitination facilitates DNA non-homologous end joining (NHEJ) by enhancing association with XRCC5/Ku80 and XRCC6/Ku70. Monoubiquitinated. Undergoes proteolytic processing by caspase-3 (CASP3). This generates the protein XRCC4, C-terminus (XRCC4/C), which translocates to the cytoplasm and activates phospholipid scramblase activity of XKR4, thereby promoting phosphatidylserine exposure on apoptotic cell surface.

It localises to the nucleus. The protein resides in the chromosome. The protein localises to the cytoplasm. Its function is as follows. DNA non-homologous end joining (NHEJ) core factor, required for double-strand break repair and V(D)J recombination. Acts as a scaffold protein that regulates recruitment of other proteins to DNA double-strand breaks (DSBs). Associates with NHEJ1/XLF to form alternating helical filaments that bridge DNA and act like a bandage, holding together the broken DNA until it is repaired. The XRCC4-NHEJ1/XLF subcomplex binds to the DNA fragments of a DSB in a highly diffusive manner and robustly bridges two independent DNA molecules, holding the broken DNA fragments in close proximity to one other. The mobility of the bridges ensures that the ends remain accessible for further processing by other repair factors. Plays a key role in the NHEJ ligation step of the broken DNA during DSB repair via direct interaction with DNA ligase IV (LIG4): the LIG4-XRCC4 subcomplex reseals the DNA breaks after the gap filling is completed. XRCC4 stabilizes LIG4, regulates its subcellular localization and enhances LIG4's joining activity. Binding of the LIG4-XRCC4 subcomplex to DNA ends is dependent on the assembly of the DNA-dependent protein kinase complex DNA-PK to these DNA ends. Promotes displacement of PNKP from processed strand break termini. In terms of biological role, acts as an activator of the phospholipid scramblase activity of XKR4. This form, which is generated upon caspase-3 (CASP3) cleavage, translocates into the cytoplasm and interacts with XKR4, thereby promoting phosphatidylserine scramblase activity of XKR4 and leading to phosphatidylserine exposure on apoptotic cell surface. This chain is DNA repair protein XRCC4, found in Cricetulus griseus (Chinese hamster).